The primary structure comprises 357 residues: Decapping nuclease RAI1 (357 aa).

E157 provides a ligand contact to a divalent metal cation. Residues C189 and E206 each contribute to the substrate site. D208, E226, and L227 together coordinate a divalent metal cation. Substrate contacts are provided by K228 and Q252.

This sequence belongs to the DXO/Dom3Z family. As to quaternary structure, interacts with rat1; the interaction is direct, stabilizes rat1 protein structure and stimulates its exoribonuclease activity. The interaction also stimulates rai1 pyrophosphohydrolase activity, probably by recruiting it to mRNA substrates. A divalent metal cation is required as a cofactor.

The protein resides in the nucleus. The catalysed reaction is a 5'-end NAD(+)-phospho-ribonucleoside in mRNA + H2O = a 5'-end phospho-ribonucleoside in mRNA + NAD(+) + H(+). The enzyme catalyses a 5'-end (N(7)-methyl 5'-triphosphoguanosine)-ribonucleoside-ribonucleotide in mRNA + H2O = a (N(7)-methyl 5'-triphosphoguanosine)-nucleoside + a 5'-end phospho-ribonucleoside in mRNA + H(+). It catalyses the reaction a 5'-end triphospho-ribonucleoside in mRNA + H2O = a 5'-end phospho-ribonucleoside in mRNA + diphosphate + H(+). In terms of biological role, decapping enzyme for NAD-capped RNAs: specifically hydrolyzes the nicotinamide adenine dinucleotide (NAD) cap from a subset of RNAs by removing the entire NAD moiety from the 5'-end of an NAD-capped RNA. The NAD-cap is present at the 5'-end of some RNAs and snoRNAs. In contrast to the canonical 5'-end N7 methylguanosine (m7G) cap, the NAD cap promotes mRNA decay. Also acts as a non-canonical decapping enzyme that removes the entire cap structure of m7G capped or incompletely capped RNAs. Has decapping activity toward incomplete 5'-end m7G cap mRNAs such as unmethylated 5'-end-capped RNA (cap0), while it has no activity toward 2'-O-ribose methylated m7G cap (cap1). Also possesses RNA 5'-pyrophosphohydrolase activity by hydrolyzing the 5'-end triphosphate to release pyrophosphates. Stimulates exoribonuclease activity of Rat1, allowing it to degrade RNAs with stable secondary structure more effectively. The polypeptide is Decapping nuclease RAI1 (rai1) (Emericella nidulans (strain FGSC A4 / ATCC 38163 / CBS 112.46 / NRRL 194 / M139) (Aspergillus nidulans)).